An 81-amino-acid chain; its full sequence is uncharacterized protein (81 aa).

A disordered region spans residues 55–81; the sequence is LDKRNSNNKIEKSENTGENHDNNQDQK.

This is an uncharacterized protein from Thermoproteus tenax virus 1 (strain KRA1) (TTV1).